The following is a 175-amino-acid chain: Peptide methionine sulfoxide reductase MsrA (175 aa).

Cysteine 10 is an active-site residue.

This sequence belongs to the MsrA Met sulfoxide reductase family.

The enzyme catalyses L-methionyl-[protein] + [thioredoxin]-disulfide + H2O = L-methionyl-(S)-S-oxide-[protein] + [thioredoxin]-dithiol. The catalysed reaction is [thioredoxin]-disulfide + L-methionine + H2O = L-methionine (S)-S-oxide + [thioredoxin]-dithiol. In terms of biological role, has an important function as a repair enzyme for proteins that have been inactivated by oxidation. Catalyzes the reversible oxidation-reduction of methionine sulfoxide in proteins to methionine. The protein is Peptide methionine sulfoxide reductase MsrA of Psychrobacter sp. (strain PRwf-1).